Here is a 133-residue protein sequence, read N- to C-terminus: ATP synthase epsilon chain, chloroplastic (133 aa).

The protein belongs to the ATPase epsilon chain family. F-type ATPases have 2 components, CF(1) - the catalytic core - and CF(0) - the membrane proton channel. CF(1) has five subunits: alpha(3), beta(3), gamma(1), delta(1), epsilon(1). CF(0) has three main subunits: a, b and c.

It localises to the plastid. Its subcellular location is the chloroplast thylakoid membrane. Functionally, produces ATP from ADP in the presence of a proton gradient across the membrane. This chain is ATP synthase epsilon chain, chloroplastic, found in Nicotiana sylvestris (Wood tobacco).